We begin with the raw amino-acid sequence, 49 residues long: Large ribosomal subunit protein bL32 (49 aa).

It belongs to the bacterial ribosomal protein bL32 family.

The sequence is that of Large ribosomal subunit protein bL32 from Helicobacter hepaticus (strain ATCC 51449 / 3B1).